A 173-amino-acid polypeptide reads, in one-letter code: Alpha-crystallin A chain (173 aa).

N-acetylmethionine is present on methionine 1. In terms of domain architecture, sHSP spans 52 to 162 (LFRSVLESGI…SHSERPIPVS (111 aa)). The Zn(2+) site is built by histidine 100, glutamate 102, histidine 107, and histidine 154. The disordered stretch occupies residues 142–173 (SGPKVPSNMDPSHSERPIPVSREEKPTSAPSS). Over residues 153-167 (SHSERPIPVSREEKP) the composition is skewed to basic and acidic residues. An O-linked (GlcNAc) serine glycan is attached at serine 162.

The protein belongs to the small heat shock protein (HSP20) family. Heteropolymer composed of three CRYAA and one CRYAB subunits. Inter-subunit bridging via zinc ions enhances stability, which is crucial as there is no protein turn over in the lens. Can also form homodimers and homotetramers (dimers of dimers) which serve as the building blocks of homooligomers. Within homooligomers, the zinc-binding motif is created from residues of 3 different molecules. His-100 and Glu-102 from one molecule are ligands of the zinc ion, and His-107 and His-154 residues from additional molecules complete the site with tetrahedral coordination geometry.

The protein resides in the cytoplasm. It is found in the nucleus. Its function is as follows. Contributes to the transparency and refractive index of the lens. May act as a chaperone, preventing aggregation of various proteins under a wide range of stress conditions. In Gallus gallus (Chicken), this protein is Alpha-crystallin A chain (CRYAA).